A 115-amino-acid polypeptide reads, in one-letter code: Transcription and mRNA export factor ENY2 (115 aa).

Belongs to the ENY2 family. In terms of assembly, component of a deubiquitination module (DUB module) formed by ENY2, SGF11, and UBP22 in Arabidopsis. Interacts directly with SGF11, but not with UBP22. Interacts with MOS4. As to expression, expressed in roots, cotyledons, leaves and upper part of sepals.

The protein resides in the nucleus. It is found in the nucleoplasm. In terms of biological role, component of a deubiquitination module (DUB module) that specifically deubiquinates monoubiquinated histone H2B (H2Bub). Does not seem to be a component of the TREX-2 complex. Seems to act independently of the SAGA multiprotein complex. The DUB module is responsible for the major H2Bub deubiquitinase activity in Arabidopsis. The chain is Transcription and mRNA export factor ENY2 from Arabidopsis thaliana (Mouse-ear cress).